Here is a 398-residue protein sequence, read N- to C-terminus: 1-deoxy-D-xylulose 5-phosphate reductoisomerase (398 aa).

The NADPH site is built by threonine 11, glycine 12, serine 13, isoleucine 14, arginine 38, asparagine 39, and asparagine 125. Residue lysine 126 coordinates 1-deoxy-D-xylulose 5-phosphate. Residue glutamate 127 coordinates NADPH. Aspartate 151 contributes to the Mn(2+) binding site. Residues serine 152, glutamate 153, serine 179, and histidine 202 each contribute to the 1-deoxy-D-xylulose 5-phosphate site. Residue glutamate 153 participates in Mn(2+) binding. Glycine 208 contacts NADPH. 1-deoxy-D-xylulose 5-phosphate contacts are provided by serine 215, asparagine 220, lysine 221, and glutamate 224. Glutamate 224 lines the Mn(2+) pocket.

Belongs to the DXR family. Mg(2+) serves as cofactor. Requires Mn(2+) as cofactor.

The catalysed reaction is 2-C-methyl-D-erythritol 4-phosphate + NADP(+) = 1-deoxy-D-xylulose 5-phosphate + NADPH + H(+). It functions in the pathway isoprenoid biosynthesis; isopentenyl diphosphate biosynthesis via DXP pathway; isopentenyl diphosphate from 1-deoxy-D-xylulose 5-phosphate: step 1/6. Catalyzes the NADPH-dependent rearrangement and reduction of 1-deoxy-D-xylulose-5-phosphate (DXP) to 2-C-methyl-D-erythritol 4-phosphate (MEP). In Burkholderia pseudomallei (strain 1106a), this protein is 1-deoxy-D-xylulose 5-phosphate reductoisomerase.